We begin with the raw amino-acid sequence, 411 residues long: Aspartate kinase (411 aa).

In terms of domain architecture, ACT spans 265–348 (LTIRGVPDTP…KIAKVSIVGV (84 aa)).

The protein belongs to the aspartokinase family.

Its subcellular location is the cytoplasm. It catalyses the reaction L-aspartate + ATP = 4-phospho-L-aspartate + ADP. The protein operates within amino-acid biosynthesis; L-lysine biosynthesis via DAP pathway; (S)-tetrahydrodipicolinate from L-aspartate: step 1/4. Its pathway is amino-acid biosynthesis; L-methionine biosynthesis via de novo pathway; L-homoserine from L-aspartate: step 1/3. It participates in amino-acid biosynthesis; L-threonine biosynthesis; L-threonine from L-aspartate: step 1/5. Allosterically feedback inhibited by L-lysine and L-threonine individually and also subject to a concerted feedback inhibition by these amino acids. Functionally, involved in the biosynthesis of L-aspartate-beta-semialdehyde which is a central intermediate in the biosynthesis of different amino acids (L-lysine, L-methionine, L-threonine). Catalyzes the phosphorylation of the beta-carboxyl group of L-aspartate to yield 4-phospho-L-aspartate. The polypeptide is Aspartate kinase (Pseudomonas putida (strain ATCC 47054 / DSM 6125 / CFBP 8728 / NCIMB 11950 / KT2440)).